The following is a 282-amino-acid chain: MAKILYGNEVALKIKEDLNLRIDKLKEKNIIPKLAILRMGNKPDDIAYERSIIKSCEKLNIETKVEELNEDILEEDFLKLMESLNNEKEIHGILVFRPYPKHLNENIINSSIALNKDVDCMHPLNLERIFEGDLNGFMPCTPEAVIEILKYYDIDLKGKNIVIINRSMVVGKPLSMMVLSHNATVTICHSRTIDLPSITKKADIVVTAIGKAKLIKEEYFNEDSIVMDVSINIDENGKLCGDVDFENVKEKVGAITPVPKGVGSVTTTLLLKHIVDAAERNS.

NADP(+) contacts are provided by residues 165 to 167, S190, and I231; that span reads NRS.

This sequence belongs to the tetrahydrofolate dehydrogenase/cyclohydrolase family. As to quaternary structure, homodimer.

The enzyme catalyses (6R)-5,10-methylene-5,6,7,8-tetrahydrofolate + NADP(+) = (6R)-5,10-methenyltetrahydrofolate + NADPH. It carries out the reaction (6R)-5,10-methenyltetrahydrofolate + H2O = (6R)-10-formyltetrahydrofolate + H(+). It participates in one-carbon metabolism; tetrahydrofolate interconversion. Catalyzes the oxidation of 5,10-methylenetetrahydrofolate to 5,10-methenyltetrahydrofolate and then the hydrolysis of 5,10-methenyltetrahydrofolate to 10-formyltetrahydrofolate. The chain is Bifunctional protein FolD from Clostridium botulinum (strain ATCC 19397 / Type A).